Consider the following 3961-residue polypeptide: Replicase polyprotein 1ab (3961 aa).

The C4-type; atypical zinc-finger motif lies at 8 to 28 (CTCTPNARVFVAEGQVYCTRC). The Peptidase C31 domain occupies 69-180 (ECSPTGACWL…EDFCPFECAM (112 aa)). The PCP1-alpha stretch occupies residues 69 to 182 (ECSPTGACWL…FCPFECAMAD (114 aa)). Active-site for Nsp1-alpha papain-like cysteine proteinase activity residues include C76 and H146. The tract at residues 199-200 (VS) is important for host EIF2AK2 inhibition. A PCP1-beta region spans residues 263–382 (DTVPEGNCWW…IFRFGSHKWY (120 aa)). The Peptidase C32 domain occupies 263–383 (DTVPEGNCWW…FRFGSHKWYG (121 aa)). Residues C270 and H339 each act as for Nsp1-beta papain-like cysteine proteinase activity in the active site. The tract at residues 426–513 (LKLYSPPAEG…GEHWTVSVNP (88 aa)) is OTU-like. The 108-residue stretch at 428–535 (LYSPPAEGNC…QGCCEHKGGL (108 aa)) folds into the Peptidase C33 domain. Residues C437 and H506 each act as for Nsp2 cysteine proteinase activity in the active site. The segment covering 810-819 (WTPPPPPPRV) has biased composition (pro residues). Disordered stretches follow at residues 810-875 (WTPP…FPTP), 899-918 (TPLDGSAPVPAPRRTVSRPM), and 1148-1191 (TGEL…PADT). 7 helical membrane passes run 1266–1286 (FCLFLCYSYPFFGFAPLLGVF), 1296–1316 (GVFGCWLAFAVGLFKPVSDPV), 1368–1388 (VWHFLLRFGIVADCILAGAYV), 1583–1603 (LVAALHVACSMALHMLAGVYV), 1648–1668 (LTALVAGFGLQEIALVVLIFV), 1685–1705 (CILLAIASYVWVPLTWLLCVF), and 1719–1739 (ILWLVFFLISVNIPSGILAVV). The segment at 1266 to 1388 (FCLFLCYSYP…ADCILAGAYV (123 aa)) is HD1. An HD2 region spans residues 1583-1745 (LVAALHVACS…LAVVLLVSLW (163 aa)). A Peptidase S32 domain is found at 1810 to 2013 (GAFRTQKPSL…ALLAAKPELE (204 aa)). Residues H1848, D1873, and S1927 each act as charge relay system; for 3C-like serine proteinase activity in the active site. The next 5 membrane-spanning stretches (helical) occupy residues 2036–2056 (WTPLVAVGFFILNEILPAVLV), 2060–2080 (FSFGMFVLSWLTPWSAQVLMI), 2092–2112 (LSLGFYSLGAVTSFVADLAVT), 2137–2157 (SPVPVIACGVVHLLAIILYLF), and 2162–2182 (LHYVLVGDGVFSSAFFLRYFA). Residues 2036–2157 (WTPLVAVGFF…HLLAIILYLF (122 aa)) are HD3. Positions 2488 to 2651 (IIDKLQGLTK…LPYKLYPVRG (164 aa)) constitute a NiRAN domain. A RdRp catalytic domain is found at 2890–3024 (GRCLEADLAS…YAESPSMPNY (135 aa)). The 64-residue stretch at 3145-3208 (GKKSRMCGYC…PPLGKGTSPL (64 aa)) folds into the AV ZBD domain. 12 residues coordinate Zn(2+): C3151, C3154, C3164, C3169, H3172, H3174, H3176, H3178, C3185, H3187, C3194, and C3197. The (+)RNA virus helicase ATP-binding domain maps to 3265–3417 (ASTALLPTCK…VFDIMPQTQL (153 aa)). 3293–3300 (GPPGAGKT) provides a ligand contact to ATP. Residues 3418–3546 (KTIWRFGQNI…AVHRDEQLIV (129 aa)) form the (+)RNA virus helicase C-terminal domain. Residues 3585–3681 (EGSSSPLPKV…LTKFVRGEAQ (97 aa)) enclose the AV-Nsp11N/CoV-Nsp15M domain. The NendoU domain occupies 3683–3805 (LPETVFSTGR…MVWKGKTAYF (123 aa)). Active-site residues include H3714, H3729, and K3758.

It belongs to the arteriviridae polyprotein family. As to quaternary structure, nsp1-alpha papain-like: Interacts with host RNF31. Interacts with host EIF2AK2; this interaction occurs in host stress granules and leads to EIF2AK2 inhibition. Interacts with host G3BP1; this interaction probably plays a role in Nsp1-beta-mediated inhibition of host EIF2AK2. In terms of assembly, interacts with host DDX18; this interaction redistributes host DDX18 to the cytoplasm. As to quaternary structure, interacts with host IFITM1. Interacts with host DDX5. In terms of assembly, interacts with host OTULIN. As to quaternary structure, interacts with host LGALS3. In terms of processing, specific enzymatic cleavages in vivo by its own proteases yield mature proteins. Nsp1 is autocleaved into two subunits, Nsp1-alpha and Nsp1-beta. There are two alternative pathways for processing. Either nsp4-5 is cleaved, which represents the major pathway or the nsp5-6 and nsp6-7 are processed, which represents the minor pathway. The major pathway occurs when nsp2 acts as a cofactor for nsp4.

The protein localises to the host nucleus. It is found in the host cytoplasm. The protein resides in the host membrane. It localises to the host endoplasmic reticulum. Its subcellular location is the host perinuclear region. It catalyses the reaction RNA(n) + a ribonucleoside 5'-triphosphate = RNA(n+1) + diphosphate. The catalysed reaction is ATP + H2O = ADP + phosphate + H(+). The enzyme catalyses Thiol-dependent hydrolysis of ester, thioester, amide, peptide and isopeptide bonds formed by the C-terminal Gly of ubiquitin (a 76-residue protein attached to proteins as an intracellular targeting signal).. It carries out the reaction uridylyl-uridylyl-ribonucleotide-RNA = a 3'-end uridylyl-2',3'-cyclophospho-uridine-RNA + a 5'-end dephospho-ribonucleoside-RNA. Contains the activities necessary for the transcription of negative stranded RNA, leader RNA, subgenomic mRNAs and progeny virion RNA as well as proteinases responsible for the cleavage of the polyprotein into functional products. Its function is as follows. Inhibits host IFN-beta production. Plays a role in the degradation of the host transcriptional activator CREBBP protein. The degradation of host CREBBP which is a key component of the IFN enhanceosome is likely responsible for the inhibition of interferon mediated by Nsp1-alpha. Also participates in the inhibition of host NF-kappa-B activation by counteracting LUBAC-dependent induction of NF-kappa-B. Reduces host NEMO ubiquitination by blocking the interaction between the two LUBAC complex components RNF31 and SHARPIN. Functionally, plays a role in blocking host mRNA nuclear export to the cytoplasm and subversion of host protein synthesis. Additionally, inhibits the interferon-activated JAK/STAT signal transduction by mediating the ubiquitination and subsequent proteasomal degradation of host KPNA1. Repurposes the host antiviral stress granules into a proviral platform to counteract the EIF2AK2/PKR restriction, thereby regulating the host inflammatory response. In terms of biological role, multifunctional protein that acts as a viral protease and as a viral antagonist of host immune response. Cleaves the nsp2/nsp3 site in the viral polyprotein. Displays deubiquitinating activity that cleaves both ubiquitinated and ISGylated products and therefore inhibits ubiquitin and ISG15-dependent host innate immunity. Also deubiquinates host NFKBIA, thereby interfering with NFKBIA degradation and impairing subsequent NF-kappa-B activation. Plays a role in the inhibition of the immune response by interacting with host IFITM1. This interaction leads to the proteasomal degradation of the IFN-induced antiviral protein IFITM1. Its function is as follows. Cleaves the majority of cleavage sites present in the C-terminus of the polyprotein. Triggers host apoptosis through caspase-3, -8, and -9 activations. Subverts host innate immune responses through its protease activity. Targets the NF-kappa-B essential modulator NEMO and mediates its cleavage. Blocks host interferon beta induction and downstream signaling by cleaving mitochondrial MAVS, dislodging it from the mitochondria. Impairs host defense by cleaving host mRNA-decapping enzyme DCP1A to attenuate its antiviral activity. Functionally, plays a role in the initial induction of autophagosomes from host endoplasmic reticulum. In terms of biological role, plays a role in the inhibition of host STAT3 signaling pathway by inducing the degradation of STAT3. Responsible for replication and transcription of the viral RNA genome. Its function is as follows. Displays RNA and DNA duplex-unwinding activities with 5' to 3' polarity. Functionally, plays a role in viral transcription/replication and prevents the simultaneous activation of host cell dsRNA sensors, such as MDA5/IFIH1, OAS, PKR and NLRP3 inflammasome. Acts by degrading the 5'-polyuridines generated during replication of the poly(A) region of viral genomic and subgenomic RNAs. Catalyzes a two-step reaction in which a 2'3'-cyclic phosphate (2'3'-cP) is first generated by 2'-O transesterification, which is then hydrolyzed to a 3'-phosphate (3'-P). If not degraded, poly(U) RNA would hybridize with poly(A) RNA tails and activate host dsRNA sensors. Also plays a role in the inhibition of host type I interferon production by recruiting host OTULIN to promote removal of linear ubiquitination targeting host NEMO. This is Replicase polyprotein 1ab (rep) from Porcine reproductive and respiratory syndrome virus (strain HB-1) (PRRSV).